We begin with the raw amino-acid sequence, 87 residues long: Small ribosomal subunit protein bS18 (87 aa).

The segment covering 1-20 (MAGKSSGDRRKPIRKGKDGK) has biased composition (basic and acidic residues). A disordered region spans residues 1–24 (MAGKSSGDRRKPIRKGKDGKNAAP).

It belongs to the bacterial ribosomal protein bS18 family. In terms of assembly, part of the 30S ribosomal subunit. Forms a tight heterodimer with protein bS6.

Functionally, binds as a heterodimer with protein bS6 to the central domain of the 16S rRNA, where it helps stabilize the platform of the 30S subunit. In Leifsonia xyli subsp. xyli (strain CTCB07), this protein is Small ribosomal subunit protein bS18.